A 343-amino-acid polypeptide reads, in one-letter code: L-rhamnose-proton symporter (343 aa).

A run of 10 helical transmembrane segments spans residues 4–24 (AIIL…CFYA), 38–58 (WSIG…YLLL), 68–88 (FSIA…IGNI), 101–121 (MGIG…TPIL), 137–157 (TLLG…AGLL), 175–195 (LILA…MDAA), 207–227 (INSL…GAII), 254–274 (LLIT…LQFF), 289–309 (MSWM…GLLL), and 320–340 (VAVL…VGLG).

It belongs to the L-rhamnose transporter (TC 2.A.7.6) family.

Its subcellular location is the cell inner membrane. It catalyses the reaction L-rhamnopyranose(in) + H(+)(in) = L-rhamnopyranose(out) + H(+)(out). Functionally, uptake of L-rhamnose across the cytoplasmic membrane with the concomitant transport of protons into the cell (symport system). The protein is L-rhamnose-proton symporter of Yersinia pestis bv. Antiqua (strain Antiqua).